A 485-amino-acid chain; its full sequence is Calcium-dependent protein kinase 27 (485 aa).

Gly-2 carries N-myristoyl glycine lipidation. A Protein kinase domain is found at 28-290 (YILGEELGRG…AAEVLGHPWM (263 aa)). Residues 34–42 (LGRGNFGLT) and Lys-57 contribute to the ATP site. Asp-156 (proton acceptor) is an active-site residue. Ser-196 is modified (phosphoserine). The tract at residues 295-325 (ASDKPIDGVVLSRLKRFRDANKFKKVVLKFI) is autoinhibitory domain. EF-hand domains follow at residues 332 to 367 (EEIKGLKTLFTNIDTDKSGNITLEELKTGLTRLGSN), 368 to 403 (LSKTEVEQLMEAADMDGNGTIDIDEFISATMHRYKL), 404 to 439 (DRDEHVYKAFQHFDKDNDGHITKEELEMAMKEDGAG), and 444 to 474 (IKQIIADADTDNDGKINFEEFRTMMRTESSL). Residues Asp-345, Asp-347, Ser-349, Asn-351, Glu-356, Asp-381, Asp-383, Asn-385, Thr-387, Glu-392, Asp-417, Asp-419, Asp-421, His-423, Glu-428, Asp-452, Asp-454, Asp-456, Lys-458, and Glu-463 each contribute to the Ca(2+) site.

It belongs to the protein kinase superfamily. Ser/Thr protein kinase family. CDPK subfamily.

It is found in the membrane. The catalysed reaction is L-seryl-[protein] + ATP = O-phospho-L-seryl-[protein] + ADP + H(+). It carries out the reaction L-threonyl-[protein] + ATP = O-phospho-L-threonyl-[protein] + ADP + H(+). Its activity is regulated as follows. Activated by calcium. Autophosphorylation may play an important role in the regulation of the kinase activity. Functionally, may play a role in signal transduction pathways that involve calcium as a second messenger. The chain is Calcium-dependent protein kinase 27 (CPK27) from Arabidopsis thaliana (Mouse-ear cress).